Consider the following 240-residue polypeptide: Uridylate kinase (240 aa).

K12 to G15 is an ATP binding site. G54 lines the UMP pocket. ATP is bound by residues G55 and R59. UMP is bound by residues D74 and T135–T142. ATP contacts are provided by T162, Y168, and D171.

Belongs to the UMP kinase family. Homohexamer.

The protein resides in the cytoplasm. The catalysed reaction is UMP + ATP = UDP + ADP. The protein operates within pyrimidine metabolism; CTP biosynthesis via de novo pathway; UDP from UMP (UMPK route): step 1/1. Inhibited by UTP. Catalyzes the reversible phosphorylation of UMP to UDP. This chain is Uridylate kinase, found in Xanthomonas axonopodis pv. citri (strain 306).